A 579-amino-acid chain; its full sequence is 2-succinyl-5-enolpyruvyl-6-hydroxy-3-cyclohexene-1-carboxylate synthase (579 aa).

The protein belongs to the TPP enzyme family. MenD subfamily. In terms of assembly, homodimer. The cofactor is Mg(2+). Requires Mn(2+) as cofactor. It depends on thiamine diphosphate as a cofactor.

It catalyses the reaction isochorismate + 2-oxoglutarate + H(+) = 5-enolpyruvoyl-6-hydroxy-2-succinyl-cyclohex-3-ene-1-carboxylate + CO2. The protein operates within quinol/quinone metabolism; 1,4-dihydroxy-2-naphthoate biosynthesis; 1,4-dihydroxy-2-naphthoate from chorismate: step 2/7. Its pathway is quinol/quinone metabolism; menaquinone biosynthesis. In terms of biological role, catalyzes the thiamine diphosphate-dependent decarboxylation of 2-oxoglutarate and the subsequent addition of the resulting succinic semialdehyde-thiamine pyrophosphate anion to isochorismate to yield 2-succinyl-5-enolpyruvyl-6-hydroxy-3-cyclohexene-1-carboxylate (SEPHCHC). In Oceanobacillus iheyensis (strain DSM 14371 / CIP 107618 / JCM 11309 / KCTC 3954 / HTE831), this protein is 2-succinyl-5-enolpyruvyl-6-hydroxy-3-cyclohexene-1-carboxylate synthase.